The sequence spans 230 residues: Phosphoribosylformylglycinamidine synthase subunit PurQ (230 aa).

A Glutamine amidotransferase type-1 domain is found at 2–226 (RVAVIVFPGS…LKTWREQNSV (225 aa)). The active-site Nucleophile is Cys86. Active-site residues include His195 and Glu197.

In terms of assembly, part of the FGAM synthase complex composed of 1 PurL, 1 PurQ and 2 PurS subunits.

It is found in the cytoplasm. The enzyme catalyses N(2)-formyl-N(1)-(5-phospho-beta-D-ribosyl)glycinamide + L-glutamine + ATP + H2O = 2-formamido-N(1)-(5-O-phospho-beta-D-ribosyl)acetamidine + L-glutamate + ADP + phosphate + H(+). The catalysed reaction is L-glutamine + H2O = L-glutamate + NH4(+). The protein operates within purine metabolism; IMP biosynthesis via de novo pathway; 5-amino-1-(5-phospho-D-ribosyl)imidazole from N(2)-formyl-N(1)-(5-phospho-D-ribosyl)glycinamide: step 1/2. In terms of biological role, part of the phosphoribosylformylglycinamidine synthase complex involved in the purines biosynthetic pathway. Catalyzes the ATP-dependent conversion of formylglycinamide ribonucleotide (FGAR) and glutamine to yield formylglycinamidine ribonucleotide (FGAM) and glutamate. The FGAM synthase complex is composed of three subunits. PurQ produces an ammonia molecule by converting glutamine to glutamate. PurL transfers the ammonia molecule to FGAR to form FGAM in an ATP-dependent manner. PurS interacts with PurQ and PurL and is thought to assist in the transfer of the ammonia molecule from PurQ to PurL. The protein is Phosphoribosylformylglycinamidine synthase subunit PurQ of Brevibacillus brevis (strain 47 / JCM 6285 / NBRC 100599).